The following is a 269-amino-acid chain: Enoyl-[acyl-carrier-protein] reductase [NADH] (269 aa).

Residues 20 to 21, 64 to 65, and 95 to 96 each bind NAD(+); these read SI, DV, and IG. Substrate is bound at residue Tyr158. NAD(+) is bound by residues Lys165 and Ile194.

This sequence belongs to the short-chain dehydrogenases/reductases (SDR) family. FabI subfamily. In terms of assembly, homodimer. Homotetramer.

It carries out the reaction a 2,3-saturated acyl-[ACP] + NAD(+) = a (2E)-enoyl-[ACP] + NADH + H(+). It catalyses the reaction a 2,3-saturated acyl-CoA + NAD(+) = a (2E)-enoyl-CoA + NADH + H(+). Its pathway is lipid metabolism; mycolic acid biosynthesis. Functionally, enoyl-ACP reductase of the type II fatty acid syntase (FAS-II) system, which is involved in the biosynthesis of mycolic acids, a major component of mycobacterial cell walls. Catalyzes the NADH-dependent reduction of the double bond of 2-trans-enoyl-[acyl-carrier protein], an essential step in the fatty acid elongation cycle of the FAS-II pathway. Shows preference for long-chain fatty acyl thioester substrates, and can also use 2-trans-enoyl-CoAs as alternative substrates. The mycobacterial FAS-II system utilizes the products of the FAS-I system as primers to extend fatty acyl chain lengths up to C56, forming the meromycolate chain that serves as the precursor for final mycolic acids. Its function is as follows. Is the primary target of the first-line antitubercular drug isoniazid (INH) and of the second-line drug ethionamide (ETH). Overexpressed inhA confers INH and ETH resistance to M.bovis. The mechanism of isoniazid action against InhA is covalent attachment of the activated form of the drug to the nicotinamide ring of NAD and binding of the INH-NAD adduct to the active site of InhA. Similarly, the ETH-NAD adduct binds InhA. This Mycobacterium bovis (strain ATCC BAA-935 / AF2122/97) protein is Enoyl-[acyl-carrier-protein] reductase [NADH].